The following is a 334-amino-acid chain: Leucine-rich repeat-containing protein 39 (334 aa).

Residues 10 to 47 (AVNAVKEVWEKRIKKLNEDLKREKEFQQKLVRIWEERV) adopt a coiled-coil conformation. 9 LRR repeats span residues 84–105 (QLQE…IGRF), 107–128 (NLIV…IGLL), 130–151 (RLQE…LSYC), 153–176 (SLEK…SNLL), 177–198 (KLTH…VLNM), 200–221 (ALEW…IERM), 223–244 (NLHT…ISSM), 246–267 (NLST…MEKM), and 269–290 (NLRF…PPSE).

In terms of assembly, interacts with MYH7 (via C-terminus).

The protein localises to the cytoplasm. Its subcellular location is the myofibril. It is found in the sarcomere. It localises to the m line. Component of the sarcomeric M-band which plays a role in myocyte response to biomechanical stress. May regulate expression of other M-band proteins via an SRF-dependent pathway. Important for normal contractile function in heart. This Bos taurus (Bovine) protein is Leucine-rich repeat-containing protein 39.